A 172-amino-acid polypeptide reads, in one-letter code: 3-hydroxydecanoyl-[acyl-carrier-protein] dehydratase (172 aa).

Residue His71 is part of the active site.

It belongs to the thioester dehydratase family. FabA subfamily. As to quaternary structure, homodimer.

Its subcellular location is the cytoplasm. It carries out the reaction a (3R)-hydroxyacyl-[ACP] = a (2E)-enoyl-[ACP] + H2O. The enzyme catalyses (3R)-hydroxydecanoyl-[ACP] = (2E)-decenoyl-[ACP] + H2O. The catalysed reaction is (2E)-decenoyl-[ACP] = (3Z)-decenoyl-[ACP]. It participates in lipid metabolism; fatty acid biosynthesis. Functionally, necessary for the introduction of cis unsaturation into fatty acids. Catalyzes the dehydration of (3R)-3-hydroxydecanoyl-ACP to E-(2)-decenoyl-ACP and then its isomerization to Z-(3)-decenoyl-ACP. Can catalyze the dehydratase reaction for beta-hydroxyacyl-ACPs with saturated chain lengths up to 16:0, being most active on intermediate chain length. The polypeptide is 3-hydroxydecanoyl-[acyl-carrier-protein] dehydratase (Brucella anthropi (strain ATCC 49188 / DSM 6882 / CCUG 24695 / JCM 21032 / LMG 3331 / NBRC 15819 / NCTC 12168 / Alc 37) (Ochrobactrum anthropi)).